Consider the following 370-residue polypeptide: MTVRNLFLLPGDGIGPEAMAEVRKIIAYMNAERDAGFVTDEGLVGGSAYDAHGAAISEGDMAKALAADAVLFGAVGGPKWDAVPYEVRPEAGLLRLRKDLELFANLRPAICYPALANASSLKPELVEGLDILIVRELTGGVYFGEPKEIVDLGNGQKRGIDTQVYDTYEIERIAGVAFELARTRNNRVCSMEKRNVMKSGVLWNQVVTETHKAKYSDVQLEHMLADAGGMQLVRQPKQFDVIVTDNLFGDMLSDVAAMLTGSLGMLPSASLGAPDAKTGKRKALYEPVHGSAPDIAGTGVANPIAMIASFAMCLRYSFNLVKEADDLEKAIANVLDQGIRTGDIMAEGCRKVGTAEMGDAILAEFKSLSA.

77–90 (GPKWDAVPYEVRPE) lines the NAD(+) pocket. Residues Arg97, Arg107, Arg135, and Asp226 each coordinate substrate. Mg(2+) contacts are provided by Asp226, Asp250, and Asp254. 290 to 302 (GSAPDIAGTGVAN) lines the NAD(+) pocket.

Belongs to the isocitrate and isopropylmalate dehydrogenases family. LeuB type 1 subfamily. As to quaternary structure, homodimer. Requires Mg(2+) as cofactor. It depends on Mn(2+) as a cofactor.

Its subcellular location is the cytoplasm. It carries out the reaction (2R,3S)-3-isopropylmalate + NAD(+) = 4-methyl-2-oxopentanoate + CO2 + NADH. It participates in amino-acid biosynthesis; L-leucine biosynthesis; L-leucine from 3-methyl-2-oxobutanoate: step 3/4. Catalyzes the oxidation of 3-carboxy-2-hydroxy-4-methylpentanoate (3-isopropylmalate) to 3-carboxy-4-methyl-2-oxopentanoate. The product decarboxylates to 4-methyl-2 oxopentanoate. In Rhizobium meliloti (strain 1021) (Ensifer meliloti), this protein is 3-isopropylmalate dehydrogenase.